Consider the following 577-residue polypeptide: Type I restriction enzyme MjaVII methylase subunit (577 aa).

S-adenosyl-L-methionine-binding positions include 251 to 256 (EVYTPV), 281 to 283 (SGT), Glu306, and 335 to 336 (DS).

It belongs to the N4/N6-methyltransferase family. The type I restriction/modification system is composed of three polypeptides R, M and S.

It carries out the reaction a 2'-deoxyadenosine in DNA + S-adenosyl-L-methionine = an N(6)-methyl-2'-deoxyadenosine in DNA + S-adenosyl-L-homocysteine + H(+). Functionally, the subtype gamma methyltransferase (M) subunit of a type I restriction enzyme. The M and S subunits together form a methyltransferase (MTase) that methylates A-3 on the top and bottom strands of the sequence 5'-CAAN(7)TGG-3'. In the presence of the R subunit the complex can also act as an endonuclease, binding to the same target sequence but cutting the DNA some distance from this site. Whether the DNA is cut or modified depends on the methylation state of the target sequence. When the target site is unmodified, the DNA is cut. When the target site is hemimethylated, the complex acts as a maintenance MTase modifying the DNA so that both strands become methylated. After locating a non-methylated recognition site, the enzyme complex serves as a molecular motor that translocates DNA in an ATP-dependent manner until a collision occurs that triggers cleavage. The polypeptide is Type I restriction enzyme MjaVII methylase subunit (Methanocaldococcus jannaschii (strain ATCC 43067 / DSM 2661 / JAL-1 / JCM 10045 / NBRC 100440) (Methanococcus jannaschii)).